We begin with the raw amino-acid sequence, 237 residues long: Purine nucleoside phosphorylase DeoD-type (237 aa).

An a purine D-ribonucleoside-binding site is contributed by histidine 4. Residues glycine 20, arginine 24, arginine 43, and 87–90 (RVGT) each bind phosphate. Residues 179–181 (EME) and 203–204 (SD) contribute to the a purine D-ribonucleoside site. Aspartate 204 acts as the Proton donor in catalysis.

It belongs to the PNP/UDP phosphorylase family. As to quaternary structure, homohexamer; trimer of homodimers.

The catalysed reaction is a purine D-ribonucleoside + phosphate = a purine nucleobase + alpha-D-ribose 1-phosphate. The enzyme catalyses a purine 2'-deoxy-D-ribonucleoside + phosphate = a purine nucleobase + 2-deoxy-alpha-D-ribose 1-phosphate. In terms of biological role, catalyzes the reversible phosphorolytic breakdown of the N-glycosidic bond in the beta-(deoxy)ribonucleoside molecules, with the formation of the corresponding free purine bases and pentose-1-phosphate. The polypeptide is Purine nucleoside phosphorylase DeoD-type (Streptococcus pyogenes serotype M5 (strain Manfredo)).